A 233-amino-acid chain; its full sequence is tRNA (guanine-N(7)-)-methyltransferase (233 aa).

Residues 1 to 22 (MIDENHPMRAAGNFFGRRHGKP) are disordered. Glu64, Glu89, Asp116, and Asp138 together coordinate S-adenosyl-L-methionine. Residue Asp138 is part of the active site. Residues Lys142, Asp174, and 212 to 215 (TRYE) contribute to the substrate site.

The protein belongs to the class I-like SAM-binding methyltransferase superfamily. TrmB family.

It catalyses the reaction guanosine(46) in tRNA + S-adenosyl-L-methionine = N(7)-methylguanosine(46) in tRNA + S-adenosyl-L-homocysteine. It functions in the pathway tRNA modification; N(7)-methylguanine-tRNA biosynthesis. Functionally, catalyzes the formation of N(7)-methylguanine at position 46 (m7G46) in tRNA. The chain is tRNA (guanine-N(7)-)-methyltransferase from Brucella abortus (strain 2308).